We begin with the raw amino-acid sequence, 366 residues long: Growth hormone secretagogue receptor type 1 (366 aa).

Topologically, residues M1–A40 are extracellular. N-linked (GlcNAc...) asparagine glycosylation is found at N13 and N27. Residues P41–L66 traverse the membrane as a helical segment. The Cytoplasmic portion of the chain corresponds to V67–R72. The chain crosses the membrane as a helical span at residues E73–M96. The Extracellular segment spans residues P97–K117. A disulfide bond links C116 and C198. The chain crosses the membrane as a helical span at residues L118–V139. Residues E140–L162 lie on the Cytoplasmic side of the membrane. Residues V163–G183 form a helical membrane-spanning segment. The Extracellular portion of the chain corresponds to V184–T211. N188 is a glycosylation site (N-linked (GlcNAc...) asparagine). The helical transmembrane segment at I212–I235 threads the bilayer. At G236–K263 the chain is on the cytoplasmic side. The chain crosses the membrane as a helical span at residues M264 to L285. Residues F286–Q302 are Extracellular-facing. A helical membrane pass occupies residues Y303–M326. Over S327–T366 the chain is Cytoplasmic.

The protein belongs to the G-protein coupled receptor 1 family.

It localises to the cell membrane. Functionally, receptor for ghrelin, coupled to G-alpha-11 proteins. Stimulates growth hormone secretion. Also binds other growth hormone releasing peptides (GHRP) (e.g. Met-enkephalin and GHRP-6) as well as non-peptide, low molecular weight secretagogues (e.g. L-692,429, MK-0677, adenosine). The protein is Growth hormone secretagogue receptor type 1 (GHSR) of Oryctolagus cuniculus (Rabbit).